We begin with the raw amino-acid sequence, 665 residues long: Translation factor GUF1 homolog, mitochondrial (665 aa).

The transit peptide at 1-35 directs the protein to the mitochondrion; it reads MAGAAVLRRSARRIYRHLAAAPAFSRSVLQQPKRL. The segment at 34 to 53 is disordered; it reads RLLSSQSSPEHGARGAVSGS. Residues 61–249 form the tr-type G domain; sequence ERVRNFSIIA…AVIERIPSPP (189 aa). GTP is bound by residues 70–77, 142–146, and 196–199; these read AHVDHGKS, DTPGH, and NKID.

The protein belongs to the TRAFAC class translation factor GTPase superfamily. Classic translation factor GTPase family. LepA subfamily.

The protein resides in the mitochondrion inner membrane. It carries out the reaction GTP + H2O = GDP + phosphate + H(+). Functionally, promotes mitochondrial protein synthesis. May act as a fidelity factor of the translation reaction, by catalyzing a one-codon backward translocation of tRNAs on improperly translocated ribosomes. Binds to mitochondrial ribosomes in a GTP-dependent manner. This Sorghum bicolor (Sorghum) protein is Translation factor GUF1 homolog, mitochondrial.